Reading from the N-terminus, the 82-residue chain is Musculoskeletal embryonic nuclear protein 1 (82 aa).

Disordered regions lie at residues 1–33 and 49–82; these read MSQA…LTKN and QAGS…SVFG. Ser2 bears the Phosphoserine mark. Positions 10-18 match the Nuclear localization signal motif; it reads PIKKKRPPV.

Belongs to the MUSTN1 family. As to expression, expression in skeletal muscle is reduced during limb unloading but increases during the active recovery phase that follows.

Its subcellular location is the nucleus. It is found in the cytoplasm. The protein resides in the secreted. It localises to the extracellular space. Its function is as follows. Required for chondrocyte development and proliferation. Plays a role in myoblast differentiation and fusion. Modulates skeletal muscle extracellular matrix composition. Plays a role in skeletal muscle function. Plays a role in glucose homeostasis. In Homo sapiens (Human), this protein is Musculoskeletal embryonic nuclear protein 1 (MUSTN1).